The chain runs to 382 residues: MTISKVPTQKLPAEGEVGLVDIGSLTTESGAVIDDVCIAVQRWGELSPTRDNVVMVLHALTGDSHITGPAGPGHPTPGWWDWIAGPGAPIDTNRWCAIATNVLGGCRGSTGPSSLARDGKPWGSRFPLISIRDQVEADIAALAAMGITKVAAVVGGSMGGARALEWIIGHPDQVRAGLLLAVGVRATADQIGTQTTQIAAIKTDPNWQGGDYYETGRAPENGLTIARRFAHLTYRSEVELDTRFANNNQGNEDPATGGRYAVQSYLEHQGDKLLARFDAGSYVVLTETLNSHDVGRGRGGIGTALRGCPVPVVVGGITSDRLYPLRLQQELAEMLPGCTGLQVVDSTYGHDGFLVESEAVGKLIRQTLELADVGSKEDACSQ.

The AB hydrolase-1 domain occupies 52 to 356 (NVVMVLHALT…TYGHDGFLVE (305 aa)). Residue S157 is the Nucleophile of the active site. R227 contributes to the substrate binding site. Catalysis depends on residues D320 and H350. D351 is a binding site for substrate.

Belongs to the AB hydrolase superfamily. MetX family. In terms of assembly, homodimer.

The protein resides in the cytoplasm. The enzyme catalyses L-homoserine + acetyl-CoA = O-acetyl-L-homoserine + CoA. It participates in amino-acid biosynthesis; L-methionine biosynthesis via de novo pathway; O-acetyl-L-homoserine from L-homoserine: step 1/1. Functionally, transfers an acetyl group from acetyl-CoA to L-homoserine, forming acetyl-L-homoserine. This is Homoserine O-acetyltransferase from Mycobacterium leprae (strain TN).